Here is a 427-residue protein sequence, read N- to C-terminus: MSRSETLFSNAQKHIPGGVNSPVRAFKSVGGTPLFFKHAEGAYVLDEDDKRYVDYVGSWGPMILGHSHPDVLDAVRRQLDHGLSYGAPTALEVEMADLVCAMVPSMEMVRMVSSGTEATMSAIRLARGYTGRDSIIKFEGCYHGHSDSLLVKAGSGALTFGVPNSPGVPAAFAKHTLTLPFNDIEAVRETLAEVGTDVACIIVEPVAGNMNCVPPAPGFLEGLREACDEHGVVLIFDEVMTGFRVALGGAQAYYGVTPDLSTFGKIIGGGMPVGAFGGKREIMQQISPLGPVYQAGTLSGNPLAMAAGLTTLRLISRPGFHDELGAYTTRMLEGLQQRADAAGIPFVTTQAGGMFGLYFTDAEAIVTFEDVMTSDVERFKRFFHLMLDGGVYLAPSAFEAGFTSIAHGDRELEITLNAAEKAFAALK.

Position 265 is an N6-(pyridoxal phosphate)lysine (Lys-265).

The protein belongs to the class-III pyridoxal-phosphate-dependent aminotransferase family. HemL subfamily. As to quaternary structure, homodimer. Requires pyridoxal 5'-phosphate as cofactor.

It localises to the cytoplasm. It catalyses the reaction (S)-4-amino-5-oxopentanoate = 5-aminolevulinate. It functions in the pathway porphyrin-containing compound metabolism; protoporphyrin-IX biosynthesis; 5-aminolevulinate from L-glutamyl-tRNA(Glu): step 2/2. In Pseudomonas paraeruginosa (strain DSM 24068 / PA7) (Pseudomonas aeruginosa (strain PA7)), this protein is Glutamate-1-semialdehyde 2,1-aminomutase.